The sequence spans 396 residues: NAD(P)H oxidoreductase RTN4IP1, mitochondrial (396 aa).

The transit peptide at 1-40 (MGVLKTCVLRRSACAAACFWRRTVIPKPPFRGISTTSARS) directs the protein to the mitochondrion. One can recognise an Enoyl reductase (ER) domain in the interval 52–393 (GKNEVLRFTQ…RGHARGKTVV (342 aa)). Residues Ser214, Gly216, Val217, Ser237, Tyr255, Asn276, Leu300, Ala341, Phe343, His386, Ala387, and Arg388 each contribute to the NADPH site.

This sequence belongs to the zinc-containing alcohol dehydrogenase family. Quinone oxidoreductase subfamily. As to quaternary structure, interacts with RTN4, UQCRC1 and UQCRC2. As to expression, widely expressed in mitochondria-enriched tissues. Found in heart, kidney, liver, brain and spinal cord.

The protein localises to the mitochondrion matrix. It is found in the mitochondrion outer membrane. The catalysed reaction is a 3-demethylubiquinone + NADH + 2 H(+) = a 3-demethylubiquinol + NAD(+). The enzyme catalyses a 3-demethylubiquinone + NADPH + 2 H(+) = a 3-demethylubiquinol + NADP(+). It carries out the reaction 3-demethylubiquinone-10 + NADH + 2 H(+) = 3-demethylubiquinol-10 + NAD(+). It catalyses the reaction 3-demethylubiquinone-10 + NADPH + 2 H(+) = 3-demethylubiquinol-10 + NADP(+). Its pathway is cofactor biosynthesis; ubiquinone biosynthesis. NAD(P)H oxidoreductase involved in the ubiquinone biosynthetic pathway. Required for the O-methyltransferase activity of COQ3. Able to catalyze the oxidoreduction of 3-demethylubiquinone into 3-demethylubiquinol in vitro. However, it is unclear if 3-demethylubiquinone constitutes a substrate in vivo. May also play a role in the regulation of retinal ganglion cell (RGC) neurite outgrowth, and hence in the development of the inner retina and optic nerve. Appears to be a potent inhibitor of regeneration following spinal cord injury. This is NAD(P)H oxidoreductase RTN4IP1, mitochondrial from Mus musculus (Mouse).